Consider the following 171-residue polypeptide: 3-hydroxydecanoyl-[acyl-carrier-protein] dehydratase (171 aa).

Residue histidine 70 is part of the active site.

Belongs to the thioester dehydratase family. FabA subfamily. In terms of assembly, homodimer.

It is found in the cytoplasm. It catalyses the reaction a (3R)-hydroxyacyl-[ACP] = a (2E)-enoyl-[ACP] + H2O. It carries out the reaction (3R)-hydroxydecanoyl-[ACP] = (2E)-decenoyl-[ACP] + H2O. The enzyme catalyses (2E)-decenoyl-[ACP] = (3Z)-decenoyl-[ACP]. It participates in lipid metabolism; fatty acid biosynthesis. Functionally, necessary for the introduction of cis unsaturation into fatty acids. Catalyzes the dehydration of (3R)-3-hydroxydecanoyl-ACP to E-(2)-decenoyl-ACP and then its isomerization to Z-(3)-decenoyl-ACP. Can catalyze the dehydratase reaction for beta-hydroxyacyl-ACPs with saturated chain lengths up to 16:0, being most active on intermediate chain length. The sequence is that of 3-hydroxydecanoyl-[acyl-carrier-protein] dehydratase from Pseudomonas aeruginosa (strain LESB58).